Here is a 168-residue protein sequence, read N- to C-terminus: Photosystem I assembly protein Ycf3 (168 aa).

TPR repeat units follow at residues 35 to 68 (AFTYYRDGMSAQSEGNYAEALQNYYEAMRLEIDP), 72 to 105 (SYILYNIGLIHTSNGEHTKALEYYFRALERNPFL), and 120 to 153 (GEQAIRQGDSEIAEAWFDQAAEYWKQAIALTPGN).

This sequence belongs to the Ycf3 family.

The protein resides in the plastid. It localises to the chloroplast thylakoid membrane. Functionally, essential for the assembly of the photosystem I (PSI) complex. May act as a chaperone-like factor to guide the assembly of the PSI subunits. The polypeptide is Photosystem I assembly protein Ycf3 (Lactuca sativa (Garden lettuce)).